Here is a 336-residue protein sequence, read N- to C-terminus: MFYPVIKKALFQLDPERAHELTFQQLRRITNTPFEFLVRQSVPTKPVTCMGLSFKNPLGLAAGLDKDGECIDALGAMGFGFIEVGTVTPRPQSGNDKPRLFRVVEAEGLINRMGFNNKGVDYLVENVKKTRFGGVLGINIGKNKDTPVEQGKDDYLICMDKVYPHAGYIAINISSPNTPGLRSLQYGEALDDLLLAIKNKQTELKEKHQKYVPVAVKIAPDLSEEELIQIADSLVRYNIDGVIATNTTLDRKLIQGLNHCGQTGGLSGRPLQTSSTEIIRRLSQELAGRLPIIGVGGIDSLVAAREKMDAGASLVQIYSGFIFHGPRLIKDIVTHI.

FMN contacts are provided by residues 62 to 66 and Thr86; that span reads AGLDK. Lys66 serves as a coordination point for substrate. 111–115 provides a ligand contact to substrate; the sequence is NRMGF. Positions 139 and 172 each coordinate FMN. Substrate is bound at residue Asn172. The active-site Nucleophile is Ser175. Asn177 is a binding site for substrate. 2 residues coordinate FMN: Lys217 and Thr245. 246-247 serves as a coordination point for substrate; that stretch reads NT. FMN is bound by residues Gly268, Gly297, and 318-319; that span reads YS.

Belongs to the dihydroorotate dehydrogenase family. Type 2 subfamily. Monomer. FMN is required as a cofactor.

It is found in the cell membrane. It carries out the reaction (S)-dihydroorotate + a quinone = orotate + a quinol. It participates in pyrimidine metabolism; UMP biosynthesis via de novo pathway; orotate from (S)-dihydroorotate (quinone route): step 1/1. Catalyzes the conversion of dihydroorotate to orotate with quinone as electron acceptor. This is Dihydroorotate dehydrogenase (quinone) from Pectobacterium atrosepticum (strain SCRI 1043 / ATCC BAA-672) (Erwinia carotovora subsp. atroseptica).